Reading from the N-terminus, the 338-residue chain is Heat-inducible transcription repressor HrcA (338 aa).

This sequence belongs to the HrcA family.

Its function is as follows. Negative regulator of class I heat shock genes (grpE-dnaK-dnaJ and groELS operons). Prevents heat-shock induction of these operons. This is Heat-inducible transcription repressor HrcA from Bacillus cereus (strain ATCC 10987 / NRS 248).